Consider the following 296-residue polypeptide: Formamidopyrimidine-DNA glycosylase (296 aa).

P2 functions as the Schiff-base intermediate with DNA in the catalytic mechanism. E3 serves as the catalytic Proton donor. Catalysis depends on K58, which acts as the Proton donor; for beta-elimination activity. H106, R125, and K168 together coordinate DNA. An FPG-type zinc finger spans residues 259–295; it reads RVYDRVGHACPTKGCTGRIGRIVQGGRSTFFCETCQV. Residue R285 is the Proton donor; for delta-elimination activity of the active site.

Belongs to the FPG family. In terms of assembly, monomer. Zn(2+) is required as a cofactor.

The catalysed reaction is Hydrolysis of DNA containing ring-opened 7-methylguanine residues, releasing 2,6-diamino-4-hydroxy-5-(N-methyl)formamidopyrimidine.. The enzyme catalyses 2'-deoxyribonucleotide-(2'-deoxyribose 5'-phosphate)-2'-deoxyribonucleotide-DNA = a 3'-end 2'-deoxyribonucleotide-(2,3-dehydro-2,3-deoxyribose 5'-phosphate)-DNA + a 5'-end 5'-phospho-2'-deoxyribonucleoside-DNA + H(+). Functionally, involved in base excision repair of DNA damaged by oxidation or by mutagenic agents. Acts as a DNA glycosylase that recognizes and removes damaged bases. Has a preference for oxidized purines, such as 7,8-dihydro-8-oxoguanine (8-oxoG). Has AP (apurinic/apyrimidinic) lyase activity and introduces nicks in the DNA strand. Cleaves the DNA backbone by beta-delta elimination to generate a single-strand break at the site of the removed base with both 3'- and 5'-phosphates. The sequence is that of Formamidopyrimidine-DNA glycosylase from Methylorubrum populi (strain ATCC BAA-705 / NCIMB 13946 / BJ001) (Methylobacterium populi).